An 88-amino-acid polypeptide reads, in one-letter code: Small ribosomal subunit protein uS15 (88 aa).

Residues 1 to 12 are compositionally biased toward polar residues; that stretch reads MLTNTDRQQVIA. The tract at residues 1–23 is disordered; sequence MLTNTDRQQVIAQYQRAPGDTGS.

The protein belongs to the universal ribosomal protein uS15 family. In terms of assembly, part of the 30S ribosomal subunit. Forms a bridge to the 50S subunit in the 70S ribosome, contacting the 23S rRNA.

Its function is as follows. One of the primary rRNA binding proteins, it binds directly to 16S rRNA where it helps nucleate assembly of the platform of the 30S subunit by binding and bridging several RNA helices of the 16S rRNA. Functionally, forms an intersubunit bridge (bridge B4) with the 23S rRNA of the 50S subunit in the ribosome. The protein is Small ribosomal subunit protein uS15 of Psychrobacter sp. (strain PRwf-1).